The primary structure comprises 274 residues: Thymidylate synthase (274 aa).

Arg21 serves as a coordination point for dUMP. His51 contributes to the (6R)-5,10-methylene-5,6,7,8-tetrahydrofolate binding site. 123-124 serves as a coordination point for dUMP; sequence RR. Cys156 acts as the Nucleophile in catalysis. DUMP contacts are provided by residues 176 to 179, Asn187, and 217 to 219; these read RSAD and HIY. Asp179 contributes to the (6R)-5,10-methylene-5,6,7,8-tetrahydrofolate binding site. Ser273 provides a ligand contact to (6R)-5,10-methylene-5,6,7,8-tetrahydrofolate.

Belongs to the thymidylate synthase family. Bacterial-type ThyA subfamily. Homodimer.

Its subcellular location is the cytoplasm. It catalyses the reaction dUMP + (6R)-5,10-methylene-5,6,7,8-tetrahydrofolate = 7,8-dihydrofolate + dTMP. The protein operates within pyrimidine metabolism; dTTP biosynthesis. Functionally, catalyzes the reductive methylation of 2'-deoxyuridine-5'-monophosphate (dUMP) to 2'-deoxythymidine-5'-monophosphate (dTMP) while utilizing 5,10-methylenetetrahydrofolate (mTHF) as the methyl donor and reductant in the reaction, yielding dihydrofolate (DHF) as a by-product. This enzymatic reaction provides an intracellular de novo source of dTMP, an essential precursor for DNA biosynthesis. This chain is Thymidylate synthase, found in Francisella tularensis subsp. tularensis (strain SCHU S4 / Schu 4).